Here is a 67-residue protein sequence, read N- to C-terminus: Large ribosomal subunit protein bL32 (67 aa).

The span at 1-19 shows a compositional bias: basic residues; that stretch reads MAVPKRKMSRSNTRARRSQ. Positions 1–21 are disordered; it reads MAVPKRKMSRSNTRARRSQWK.

It belongs to the bacterial ribosomal protein bL32 family.

In Clavibacter sepedonicus (Clavibacter michiganensis subsp. sepedonicus), this protein is Large ribosomal subunit protein bL32.